The sequence spans 499 residues: Lysine--tRNA ligase (499 aa).

2 residues coordinate Mg(2+): Glu-410 and Glu-417.

It belongs to the class-II aminoacyl-tRNA synthetase family. Homodimer. It depends on Mg(2+) as a cofactor.

It is found in the cytoplasm. It catalyses the reaction tRNA(Lys) + L-lysine + ATP = L-lysyl-tRNA(Lys) + AMP + diphosphate. The sequence is that of Lysine--tRNA ligase (lysS) from Bacillus subtilis (strain 168).